A 341-amino-acid polypeptide reads, in one-letter code: L-threonine 3-dehydrogenase (341 aa).

Residue cysteine 38 coordinates Zn(2+). Residues threonine 40 and histidine 43 each act as charge relay system in the active site. The Zn(2+) site is built by histidine 63, glutamate 64, cysteine 93, cysteine 96, cysteine 99, and cysteine 107. NAD(+)-binding positions include isoleucine 175, aspartate 195, arginine 200, 262 to 264 (LGI), and 286 to 287 (IY).

Belongs to the zinc-containing alcohol dehydrogenase family. Homotetramer. Requires Zn(2+) as cofactor.

The protein localises to the cytoplasm. It catalyses the reaction L-threonine + NAD(+) = (2S)-2-amino-3-oxobutanoate + NADH + H(+). Its pathway is amino-acid degradation; L-threonine degradation via oxydo-reductase pathway; glycine from L-threonine: step 1/2. Functionally, catalyzes the NAD(+)-dependent oxidation of L-threonine to 2-amino-3-ketobutyrate. This Pseudoalteromonas translucida (strain TAC 125) protein is L-threonine 3-dehydrogenase.